Reading from the N-terminus, the 106-residue chain is Large ribosomal subunit protein P1B (106 aa).

At serine 2 the chain carries N-acetylserine. Residues alanine 69–alanine 82 show a composition bias toward low complexity. Positions alanine 69–aspartate 106 are disordered. Acidic residues predominate over residues alanine 83 to methionine 100. Serine 96 bears the Phosphoserine mark.

The protein belongs to the eukaryotic ribosomal protein P1/P2 family. In terms of assembly, component of the large ribosomal subunit (LSU). Mature yeast ribosomes consist of a small (40S) and a large (60S) subunit. The 40S small subunit contains 1 molecule of ribosomal RNA (18S rRNA) and 33 different proteins (encoded by 57 genes). The large 60S subunit contains 3 rRNA molecules (25S, 5.8S and 5S rRNA) and 46 different proteins (encoded by 81 genes). The 5 acidic ribosomal P-proteins form the stalk structure of the 60S subunit. They are organized as a pentameric complex in which uL10/P0 interacts with 2 heterodimers, P1A-P2B and P1B-P2A.

The protein localises to the cytoplasm. Its function is as follows. Component of the ribosome, a large ribonucleoprotein complex responsible for the synthesis of proteins in the cell. The small ribosomal subunit (SSU) binds messenger RNAs (mRNAs) and translates the encoded message by selecting cognate aminoacyl-transfer RNA (tRNA) molecules. The large subunit (LSU) contains the ribosomal catalytic site termed the peptidyl transferase center (PTC), which catalyzes the formation of peptide bonds, thereby polymerizing the amino acids delivered by tRNAs into a polypeptide chain. The nascent polypeptides leave the ribosome through a tunnel in the LSU and interact with protein factors that function in enzymatic processing, targeting, and the membrane insertion of nascent chains at the exit of the ribosomal tunnel. This Saccharomyces cerevisiae (strain ATCC 204508 / S288c) (Baker's yeast) protein is Large ribosomal subunit protein P1B.